The sequence spans 78 residues: Sec-independent protein translocase protein TatA (78 aa).

A helical transmembrane segment spans residues 1 to 21; that stretch reads MGGISIWQLLIIAVIVVLLFG. The segment covering 47–59 has biased composition (basic and acidic residues); the sequence is ESEKKDADFEPKS. The disordered stretch occupies residues 47 to 78; the sequence is ESEKKDADFEPKSLEQQNKQAATESKKDKEQA. Over residues 60–69 the composition is skewed to polar residues; it reads LEQQNKQAAT.

The protein belongs to the TatA/E family. The Tat system comprises two distinct complexes: a TatABC complex, containing multiple copies of TatA, TatB and TatC subunits, and a separate TatA complex, containing only TatA subunits. Substrates initially bind to the TatABC complex, which probably triggers association of the separate TatA complex to form the active translocon.

Its subcellular location is the cell inner membrane. Functionally, part of the twin-arginine translocation (Tat) system that transports large folded proteins containing a characteristic twin-arginine motif in their signal peptide across membranes. TatA could form the protein-conducting channel of the Tat system. The sequence is that of Sec-independent protein translocase protein TatA from Vibrio vulnificus (strain YJ016).